A 308-amino-acid chain; its full sequence is UDP-N-acetylenolpyruvoylglucosamine reductase (308 aa).

The FAD-binding PCMH-type domain maps to arginine 22–glycine 185. The active site involves arginine 165. Basic and acidic residues predominate over residues glutamine 197–serine 211. The segment at glutamine 197–alanine 228 is disordered. Positions alanine 212–glycine 226 are enriched in polar residues. Serine 214 acts as the Proton donor in catalysis. Residue glutamate 296 is part of the active site.

Belongs to the MurB family. FAD serves as cofactor.

It localises to the cytoplasm. The enzyme catalyses UDP-N-acetyl-alpha-D-muramate + NADP(+) = UDP-N-acetyl-3-O-(1-carboxyvinyl)-alpha-D-glucosamine + NADPH + H(+). It functions in the pathway cell wall biogenesis; peptidoglycan biosynthesis. Functionally, cell wall formation. The sequence is that of UDP-N-acetylenolpyruvoylglucosamine reductase from Cereibacter sphaeroides (strain ATCC 17029 / ATH 2.4.9) (Rhodobacter sphaeroides).